The following is a 179-amino-acid chain: Large ribosomal subunit protein uL5 (179 aa).

The protein belongs to the universal ribosomal protein uL5 family. In terms of assembly, part of the 50S ribosomal subunit; part of the 5S rRNA/L5/L18/L25 subcomplex. Contacts the 5S rRNA and the P site tRNA. Forms a bridge to the 30S subunit in the 70S ribosome.

This is one of the proteins that bind and probably mediate the attachment of the 5S RNA into the large ribosomal subunit, where it forms part of the central protuberance. In the 70S ribosome it contacts protein S13 of the 30S subunit (bridge B1b), connecting the 2 subunits; this bridge is implicated in subunit movement. Contacts the P site tRNA; the 5S rRNA and some of its associated proteins might help stabilize positioning of ribosome-bound tRNAs. The chain is Large ribosomal subunit protein uL5 from Maridesulfovibrio salexigens (strain ATCC 14822 / DSM 2638 / NCIMB 8403 / VKM B-1763) (Desulfovibrio salexigens).